The primary structure comprises 212 residues: Agglutinin isolectin 1 (212 aa).

Residues 1 to 26 (MKMMSTRALALGAAAVLAFAAATAQA) form the signal peptide. Gln-27 carries the pyrrolidone carboxylic acid modification. Chitin-binding type-1 domains are found at residues 27-68 (QRCG…ACWT), 69-111 (SKRC…PCRA), 112-154 (DIKC…ACST), and 155-197 (DKPC…GCDG). 16 disulfide bridges follow: Cys-29/Cys-44, Cys-38/Cys-50, Cys-43/Cys-57, Cys-61/Cys-66, Cys-72/Cys-87, Cys-81/Cys-93, Cys-86/Cys-100, Cys-104/Cys-109, Cys-115/Cys-130, Cys-124/Cys-136, Cys-129/Cys-143, Cys-147/Cys-152, Cys-158/Cys-173, Cys-167/Cys-179, Cys-172/Cys-186, and Cys-190/Cys-195. 36-38 (MEC) serves as a coordination point for substrate. 88–99 (SQYGYCGFGAEY) serves as a coordination point for substrate. 140-141 (SE) contributes to the substrate binding site. The propeptide occupies 198-212 (VFAEAITANSTLLQE).

Homodimer, u-shaped.

In terms of biological role, N-acetyl-D-glucosamine / N-acetyl-D-neuraminic acid binding lectin. The chain is Agglutinin isolectin 1 from Triticum aestivum (Wheat).